The chain runs to 359 residues: Phospho-N-acetylmuramoyl-pentapeptide-transferase (359 aa).

The next 10 membrane-spanning stretches (helical) occupy residues 23–43 (VAFFVAFGLSVFFMPYFIKWA), 68–88 (MGGIVFIISMICASLLCGNLF), 92–112 (VLLGLFCISCFALIGARDDYM), 126–146 (MKFFLLFIVSLIITSILLYIG), 165–185 (AFKIMDISVLALGFWVLVFLA), 198–218 (GLATMPSICALFSLSAFVYVA), 235–255 (SGELVILSVALIGALFGFLWY), 262–282 (VFMGDSGSLALGAFIAFMAIV), 287–307 (ILLLLIGIIFVIEALSVILQV), and 336–356 (KIIVRFWIIAILANIIALLSL).

It belongs to the glycosyltransferase 4 family. MraY subfamily. Mg(2+) is required as a cofactor.

Its subcellular location is the cell inner membrane. The catalysed reaction is UDP-N-acetyl-alpha-D-muramoyl-L-alanyl-gamma-D-glutamyl-meso-2,6-diaminopimeloyl-D-alanyl-D-alanine + di-trans,octa-cis-undecaprenyl phosphate = di-trans,octa-cis-undecaprenyl diphospho-N-acetyl-alpha-D-muramoyl-L-alanyl-D-glutamyl-meso-2,6-diaminopimeloyl-D-alanyl-D-alanine + UMP. The protein operates within cell wall biogenesis; peptidoglycan biosynthesis. Catalyzes the initial step of the lipid cycle reactions in the biosynthesis of the cell wall peptidoglycan: transfers peptidoglycan precursor phospho-MurNAc-pentapeptide from UDP-MurNAc-pentapeptide onto the lipid carrier undecaprenyl phosphate, yielding undecaprenyl-pyrophosphoryl-MurNAc-pentapeptide, known as lipid I. The chain is Phospho-N-acetylmuramoyl-pentapeptide-transferase from Helicobacter hepaticus (strain ATCC 51449 / 3B1).